The primary structure comprises 417 residues: MIQVLLVTICLAAFPYQGSSIMLESGKVNDYEVVYPQRLAPLPEGAVQQKYEDTMQYEFKVNGETIVLHLEKNKGLFSKDYSETHYSPDGRKITTYPSVEDHCYYHGRIENYEDSTASISACNGLKGHFKIQGETYFIESLKLSDSEAHAVFKYENVEKEDETHKICGVTQNWKSYDPIKKPSWLNLTPKQQTWPQTSVNLQLIVDHSMYAKYNSNSEKITKTLQERVNIMKEIFKPLNLDITLSGIEMWDKKDLITVKTAATDTLKLFAKWRQTDLLKRIDNDNAQLQTAVDFDGETVGLAFKSTMCDKRYSAGIIQDHSAIPLLMAVTMAHELGHNLGMDHDDTSKCNCNVCIMAPRLNTNPSKTFSDCSNNDYQKFLTDKKPKCIHKKSLKTDTVSTSVSGNEPLDDNVDGFHA.

Residues 1-20 form the signal peptide; the sequence is MIQVLLVTICLAAFPYQGSS. Positions 21 to 189 are excised as a propeptide; the sequence is IMLESGKVND…KKPSWLNLTP (169 aa). A Peptidase M12B domain is found at 197 to 392; sequence TSVNLQLIVD…KKPKCIHKKS (196 aa). 3 cysteine pairs are disulfide-bonded: cysteine 308/cysteine 387, cysteine 349/cysteine 371, and cysteine 351/cysteine 354. Histidine 333 is a Zn(2+) binding site. Residue glutamate 334 is part of the active site. Positions 337 and 343 each coordinate Zn(2+). Residues 393 to 417 constitute a propeptide that is removed on maturation; it reads LKTDTVSTSVSGNEPLDDNVDGFHA. The disordered stretch occupies residues 398–417; that stretch reads VSTSVSGNEPLDDNVDGFHA. Residues 407-417 show a composition bias toward acidic residues; the sequence is PLDDNVDGFHA.

Belongs to the venom metalloproteinase (M12B) family. P-I subfamily. Monomer. It depends on Zn(2+) as a cofactor. As to expression, expressed by the venom gland.

It is found in the secreted. Its function is as follows. This protein is an alkaline zinc metalloprotease from snake venom that possesses weak hemorrhagic activity. This Deinagkistrodon acutus (Hundred-pace snake) protein is Snake venom metalloproteinase aculysin-1.